A 160-amino-acid chain; its full sequence is MNEQEPAPKRGRRFKEQTPVQRALGLLVRREHSRKELNRKLLARGIEPDAAQAAVDRLTGEGWQDDARFAAAVVRNRAGSGYGPLHIRAELGTHGLDSEAISAAMATFQGDWTENARDLIHRRFGEQGPIDLPQRRKAADWLARRGFDGNSIRAATRFDP.

This sequence belongs to the RecX family.

It localises to the cytoplasm. Modulates RecA activity. The polypeptide is Regulatory protein RecX (Xanthomonas oryzae pv. oryzae (strain MAFF 311018)).